Consider the following 494-residue polypeptide: Glutamyl-tRNA(Gln) amidotransferase subunit A (494 aa).

Active-site charge relay system residues include Lys72 and Ser147. The active-site Acyl-ester intermediate is the Ser171.

This sequence belongs to the amidase family. GatA subfamily. As to quaternary structure, heterotrimer of A, B and C subunits.

The enzyme catalyses L-glutamyl-tRNA(Gln) + L-glutamine + ATP + H2O = L-glutaminyl-tRNA(Gln) + L-glutamate + ADP + phosphate + H(+). Allows the formation of correctly charged Gln-tRNA(Gln) through the transamidation of misacylated Glu-tRNA(Gln) in organisms which lack glutaminyl-tRNA synthetase. The reaction takes place in the presence of glutamine and ATP through an activated gamma-phospho-Glu-tRNA(Gln). This is Glutamyl-tRNA(Gln) amidotransferase subunit A from Methylacidiphilum infernorum (isolate V4) (Methylokorus infernorum (strain V4)).